The chain runs to 218 residues: Deoxyribose-phosphate aldolase (218 aa).

Residue Asp92 is the Proton donor/acceptor of the active site. Lys156 functions as the Schiff-base intermediate with acetaldehyde in the catalytic mechanism. Lys185 (proton donor/acceptor) is an active-site residue.

It belongs to the DeoC/FbaB aldolase family. DeoC type 1 subfamily.

The protein localises to the cytoplasm. The enzyme catalyses 2-deoxy-D-ribose 5-phosphate = D-glyceraldehyde 3-phosphate + acetaldehyde. It functions in the pathway carbohydrate degradation; 2-deoxy-D-ribose 1-phosphate degradation; D-glyceraldehyde 3-phosphate and acetaldehyde from 2-deoxy-alpha-D-ribose 1-phosphate: step 2/2. Functionally, catalyzes a reversible aldol reaction between acetaldehyde and D-glyceraldehyde 3-phosphate to generate 2-deoxy-D-ribose 5-phosphate. The chain is Deoxyribose-phosphate aldolase from Desulfitobacterium hafniense (strain Y51).